A 361-amino-acid chain; its full sequence is MSQKVANRSIVFYNSQSPPSVITEELDLGNCFSPSELVVKIHAAALNPVDFLLQGFAYSWLVGKGPKGFSRDYSGEVVKVGANVKDFKVGDKVSGLFQHLYGKQGTLCDYLILDPSKQPAISKISPVGHPEYDDYVINASWALVFGTAYQALHNYGQNLGPDSKVLVIGASTSVSNALIQIAKNRMKIGTVVGICSKKSFEYNKKLGYDYLAAYDDGSTVENVKQIMKNNMGNEKFDLIFDSVGNSEFFECINDVLKDKCQNSHYVSVTGDKKLNYSNPRIRDSLPGWESIRRIGPFRKYNYKLLLLKPEATFAKIGSEMIAQKQFVPAVDSVYAFEDYSKAFERLKSNKAKGKVVIQISQ.

It belongs to the YIM1 family.

Its subcellular location is the lipid droplet. The protein localises to the mitochondrion. This Lachancea thermotolerans (strain ATCC 56472 / CBS 6340 / NRRL Y-8284) (Yeast) protein is Protein YIM1-2 (YIM1-2).